Reading from the N-terminus, the 181-residue chain is Ribosome maturation factor RimM (181 aa).

A PRC barrel domain is found at 98-177 (EGEFFYCDLV…KITTHNAKTL (80 aa)).

It belongs to the RimM family. In terms of assembly, binds ribosomal protein uS19.

Its subcellular location is the cytoplasm. Its function is as follows. An accessory protein needed during the final step in the assembly of 30S ribosomal subunit, possibly for assembly of the head region. Essential for efficient processing of 16S rRNA. May be needed both before and after RbfA during the maturation of 16S rRNA. It has affinity for free ribosomal 30S subunits but not for 70S ribosomes. The chain is Ribosome maturation factor RimM from Helicobacter pylori (strain HPAG1).